We begin with the raw amino-acid sequence, 352 residues long: Cell division protein ZipA (352 aa).

Topologically, residues 1-5 (MQELR) are periplasmic. Residues 6–26 (LVLIIVGALAISALLLHGLWT) traverse the membrane as a helical segment. The Cytoplasmic segment spans residues 27–352 (SRKEKPAKFG…REKAKLYSQA (326 aa)). Residues 35–54 (FGEKPLGKLDDSNRDTEGFD) show a composition bias toward basic and acidic residues. The disordered stretch occupies residues 35–56 (FGEKPLGKLDDSNRDTEGFDHT).

It belongs to the ZipA family. In terms of assembly, interacts with FtsZ via their C-terminal domains.

Its subcellular location is the cell inner membrane. Its function is as follows. Essential cell division protein that stabilizes the FtsZ protofilaments by cross-linking them and that serves as a cytoplasmic membrane anchor for the Z ring. Also required for the recruitment to the septal ring of downstream cell division proteins. The polypeptide is Cell division protein ZipA (Photobacterium profundum (strain SS9)).